A 174-amino-acid polypeptide reads, in one-letter code: Large ribosomal subunit protein uL10 (174 aa).

This sequence belongs to the universal ribosomal protein uL10 family. In terms of assembly, part of the ribosomal stalk of the 50S ribosomal subunit. The N-terminus interacts with L11 and the large rRNA to form the base of the stalk. The C-terminus forms an elongated spine to which L12 dimers bind in a sequential fashion forming a multimeric L10(L12)X complex.

Its function is as follows. Forms part of the ribosomal stalk, playing a central role in the interaction of the ribosome with GTP-bound translation factors. The polypeptide is Large ribosomal subunit protein uL10 (Geobacter sulfurreducens (strain ATCC 51573 / DSM 12127 / PCA)).